A 91-amino-acid chain; its full sequence is Large ribosomal subunit protein eL34 (91 aa).

The protein belongs to the eukaryotic ribosomal protein eL34 family.

This Thermofilum pendens (strain DSM 2475 / Hrk 5) protein is Large ribosomal subunit protein eL34.